Reading from the N-terminus, the 484-residue chain is uncharacterized protein (484 aa).

The HTH gntR-type domain maps to 14 to 82 (VPLHRQIEQY…KGGGTKVVNS (69 aa)). The segment at residues 42–61 (QRTLADMFQVNRSTVTAAID) is a DNA-binding region (H-T-H motif). The residue at position 327 (Lys327) is an N6-(pyridoxal phosphate)lysine.

The protein in the C-terminal section; belongs to the class-I pyridoxal-phosphate-dependent aminotransferase family. The cofactor is pyridoxal 5'-phosphate.

This is an uncharacterized protein from Bacillus subtilis (strain 168).